The chain runs to 294 residues: Bifunctional protein FolD (294 aa).

NADP(+) is bound by residues 176–178 (GAS), Ser201, and Ile242.

It belongs to the tetrahydrofolate dehydrogenase/cyclohydrolase family. As to quaternary structure, homodimer.

It catalyses the reaction (6R)-5,10-methylene-5,6,7,8-tetrahydrofolate + NADP(+) = (6R)-5,10-methenyltetrahydrofolate + NADPH. It carries out the reaction (6R)-5,10-methenyltetrahydrofolate + H2O = (6R)-10-formyltetrahydrofolate + H(+). It functions in the pathway one-carbon metabolism; tetrahydrofolate interconversion. Its function is as follows. Catalyzes the oxidation of 5,10-methylenetetrahydrofolate to 5,10-methenyltetrahydrofolate and then the hydrolysis of 5,10-methenyltetrahydrofolate to 10-formyltetrahydrofolate. The sequence is that of Bifunctional protein FolD from Bordetella petrii (strain ATCC BAA-461 / DSM 12804 / CCUG 43448).